Consider the following 368-residue polypeptide: Branched-chain-amino-acid aminotransferase (368 aa).

Arginine 101 lines the pyridoxal 5'-phosphate pocket. The residue at position 204 (lysine 204) is an N6-(pyridoxal phosphate)lysine. Pyridoxal 5'-phosphate is bound by residues tyrosine 209, isoleucine 271–threonine 272, and threonine 314.

It belongs to the class-IV pyridoxal-phosphate-dependent aminotransferase family. As to quaternary structure, homodimer. Pyridoxal 5'-phosphate is required as a cofactor.

The enzyme catalyses L-leucine + 2-oxoglutarate = 4-methyl-2-oxopentanoate + L-glutamate. It carries out the reaction L-isoleucine + 2-oxoglutarate = (S)-3-methyl-2-oxopentanoate + L-glutamate. It catalyses the reaction L-valine + 2-oxoglutarate = 3-methyl-2-oxobutanoate + L-glutamate. It participates in amino-acid biosynthesis; L-isoleucine biosynthesis; L-isoleucine from 2-oxobutanoate: step 4/4. Its pathway is amino-acid biosynthesis; L-leucine biosynthesis; L-leucine from 3-methyl-2-oxobutanoate: step 4/4. The protein operates within amino-acid biosynthesis; L-valine biosynthesis; L-valine from pyruvate: step 4/4. Functionally, catalyzes the reversible transfers of an amino group from glutamate to the alpha-ketoacid of the respective amino acid in the final step in the biosynthesis of branchedchain amino acids. In Mycobacterium tuberculosis (strain CDC 1551 / Oshkosh), this protein is Branched-chain-amino-acid aminotransferase (ilvE).